The chain runs to 176 residues: Lipoprotein signal peptidase (176 aa).

The next 4 membrane-spanning stretches (helical) occupy residues leucine 10–leucine 30, valine 48–phenylalanine 68, tyrosine 78–methionine 98, and methionine 102–aspartate 122. Active-site residues include aspartate 131 and aspartate 149. The chain crosses the membrane as a helical span at residues histidine 141–isoleucine 161.

This sequence belongs to the peptidase A8 family.

It is found in the cell inner membrane. The enzyme catalyses Release of signal peptides from bacterial membrane prolipoproteins. Hydrolyzes -Xaa-Yaa-Zaa-|-(S,diacylglyceryl)Cys-, in which Xaa is hydrophobic (preferably Leu), and Yaa (Ala or Ser) and Zaa (Gly or Ala) have small, neutral side chains.. It functions in the pathway protein modification; lipoprotein biosynthesis (signal peptide cleavage). In terms of biological role, this protein specifically catalyzes the removal of signal peptides from prolipoproteins. In Acinetobacter baumannii (strain SDF), this protein is Lipoprotein signal peptidase.